The following is a 30-amino-acid chain: Protamine-YII (30 aa).

The tract at residues 1–30 is disordered; it reads PRRRTRRASRPVRRRRPRRVSRRRRARRRR.

In terms of tissue distribution, testis.

It localises to the nucleus. Its subcellular location is the chromosome. In terms of biological role, protamines substitute for histones in the chromatin of sperm during the haploid phase of spermatogenesis. They compact sperm DNA into a highly condensed, stable and inactive complex. This Clupea harengus (Atlantic herring) protein is Protamine-YII.